The primary structure comprises 372 residues: tRNA-specific 2-thiouridylase MnmA (372 aa).

ATP is bound by residues 9 to 16 and M35; that span reads GLSGGVDS. Residues 95–97 form an interaction with target base in tRNA region; the sequence is NPD. The active-site Nucleophile is the C100. A disulfide bond links C100 and C198. G124 is a binding site for ATP. The tract at residues 148-150 is interaction with tRNA; sequence KDQ. Residue C198 is the Cysteine persulfide intermediate of the active site. The tract at residues 317 to 318 is interaction with tRNA; that stretch reads RY.

It belongs to the MnmA/TRMU family.

Its subcellular location is the cytoplasm. It carries out the reaction S-sulfanyl-L-cysteinyl-[protein] + uridine(34) in tRNA + AH2 + ATP = 2-thiouridine(34) in tRNA + L-cysteinyl-[protein] + A + AMP + diphosphate + H(+). Functionally, catalyzes the 2-thiolation of uridine at the wobble position (U34) of tRNA, leading to the formation of s(2)U34. In Delftia acidovorans (strain DSM 14801 / SPH-1), this protein is tRNA-specific 2-thiouridylase MnmA.